A 291-amino-acid chain; its full sequence is Elongation factor Ts (291 aa).

The interval 78–81 (TDFV) is involved in Mg(2+) ion dislocation from EF-Tu.

This sequence belongs to the EF-Ts family.

It localises to the cytoplasm. Functionally, associates with the EF-Tu.GDP complex and induces the exchange of GDP to GTP. It remains bound to the aminoacyl-tRNA.EF-Tu.GTP complex up to the GTP hydrolysis stage on the ribosome. The protein is Elongation factor Ts of Ureaplasma parvum serovar 3 (strain ATCC 27815 / 27 / NCTC 11736).